We begin with the raw amino-acid sequence, 671 residues long: Pescadillo homolog (671 aa).

A BRCT domain is found at 317–403 (KVRELFRGLT…LMLPVTGYRI (87 aa)). The stretch at 548-584 (QALRKAQEKSRQTETSEARLQRKMSEVKRQEAATRKM) forms a coiled coil. Disordered stretches follow at residues 552-578 (KAQEKSRQTETSEARLQRKMSEVKRQE) and 643-671 (RRQRAEAKSKKLKERKAGNPYKKLPKWVQ).

Belongs to the pescadillo family.

The protein localises to the nucleus. It is found in the nucleolus. It localises to the nucleoplasm. Functionally, required for maturation of ribosomal RNAs and formation of the large ribosomal subunit. The chain is Pescadillo homolog from Leishmania infantum.